The following is a 150-amino-acid chain: 3-hydroxyacyl-[acyl-carrier-protein] dehydratase FabZ (150 aa).

Residue His-57 is part of the active site.

Belongs to the thioester dehydratase family. FabZ subfamily.

It localises to the cytoplasm. The enzyme catalyses a (3R)-hydroxyacyl-[ACP] = a (2E)-enoyl-[ACP] + H2O. Its function is as follows. Involved in unsaturated fatty acids biosynthesis. Catalyzes the dehydration of short chain beta-hydroxyacyl-ACPs and long chain saturated and unsaturated beta-hydroxyacyl-ACPs. In Mannheimia succiniciproducens (strain KCTC 0769BP / MBEL55E), this protein is 3-hydroxyacyl-[acyl-carrier-protein] dehydratase FabZ.